A 216-amino-acid polypeptide reads, in one-letter code: Uracil phosphoribosyltransferase (216 aa).

Residues R85, R110, and 135–143 each bind 5-phospho-alpha-D-ribose 1-diphosphate; that span reads DPMVATGYS. Residues I200 and 205 to 207 contribute to the uracil site; that span reads GDA. Residue D206 coordinates 5-phospho-alpha-D-ribose 1-diphosphate.

The protein belongs to the UPRTase family. Mg(2+) serves as cofactor.

The catalysed reaction is UMP + diphosphate = 5-phospho-alpha-D-ribose 1-diphosphate + uracil. It functions in the pathway pyrimidine metabolism; UMP biosynthesis via salvage pathway; UMP from uracil: step 1/1. With respect to regulation, allosterically activated by GTP. Functionally, catalyzes the conversion of uracil and 5-phospho-alpha-D-ribose 1-diphosphate (PRPP) to UMP and diphosphate. This Burkholderia multivorans (strain ATCC 17616 / 249) protein is Uracil phosphoribosyltransferase.